The following is an 814-amino-acid chain: Rho GTPase-activating protein 26 (814 aa).

One can recognise a BAR domain in the interval 7 to 262 (EFSDCCLDSP…MKENPLEHKT (256 aa)). Residues 265-369 (PYTMEGYLYV…WMEAMDGREP (105 aa)) form the PH domain. Positions 383 to 568 (AQLDSIGFSI…ILIENHEKIF (186 aa)) constitute a Rho-GAP domain. Disordered stretches follow at residues 584–618 (SRKKSSDSKPPSCSKRPLTLFHAVPSTEKQEQRNS) and 638–696 (SSSL…SSDS). Low complexity-rich tracts occupy residues 591-600 (SKPPSCSKRP) and 638-661 (SSSLQPNLNSSDSNLDVVKPSRPS). Residues 662-672 (SLPPNPSPTSP) are compositionally biased toward pro residues. Residue Ser668 is modified to Phosphoserine. Thr670 bears the Phosphothreonine mark. Phosphoserine is present on Ser671. The span at 673–696 (LSPSWPMFSAPSSPMPTSSTSSDS) shows a compositional bias: low complexity. In terms of domain architecture, SH3 spans 756–814 (TPFRKAKALYACQAEHDSELSFTAGTVFDNVHPSQEPGWLEGTLNGKTGLIPENYVEFL).

In terms of assembly, interacts with NYAP1, NYAP2 and MYO16. Interacts with MICAL1 and WDR44. Binds to the C-terminus of PTK2/FAK1. In terms of processing, phosphorylated in a PINK1-dependent fashion promoting retrograde mitochondrial trafficking and clustering.

The protein localises to the cell junction. The protein resides in the focal adhesion. It localises to the cytoplasm. Its subcellular location is the cytoskeleton. It is found in the endosome membrane. Functionally, GTPase-activating protein for RHOA and CDC42. Facilitates mitochondrial quality control by promoting Parkin-mediated recruitment of autophagosomes to damaged mitochondria. Associates with MICAL1 on the endosomal membrane to promote Rab8-Rab10-dependent tubule extension. After dissociation of MICAL1, recruits WDR44 which connects the endoplasmic reticulum (ER) with the endosomal tubule, thereby participating in the export of a subset of neosynthesized proteins. This Mus musculus (Mouse) protein is Rho GTPase-activating protein 26 (Arhgap26).